The following is an 82-amino-acid chain: Putative membrane protein insertion efficiency factor (82 aa).

Belongs to the UPF0161 family.

The protein localises to the cell membrane. Functionally, could be involved in insertion of integral membrane proteins into the membrane. The sequence is that of Putative membrane protein insertion efficiency factor from Streptococcus thermophilus (strain ATCC BAA-491 / LMD-9).